Consider the following 215-residue polypeptide: uncharacterized protein (215 aa).

This sequence belongs to the mimivirus L31/R44 family.

This is an uncharacterized protein from Acanthamoeba polyphaga (Amoeba).